The following is a 694-amino-acid chain: Lamina-associated polypeptide 2, isoform alpha (694 aa).

The LEM-like domain maps to 5–48 (LEDPSVLTKDKLKSELVANNVTLPAGEQRKDVYVQLYLQHLTAR). Disordered stretches follow at residues 47-117 (ARNR…ELTN) and 150-209 (REQG…FSEL). Residues 49 to 108 (NRPPLPAGTNSKGPPDFSSDEEREPTPVLGSGAAAAGRSRAAVGRKATKKTDKPRQEDKD) are linker. Thr-57 is subject to Phosphothreonine. 3 positions are modified to phosphoserine: Ser-59, Ser-66, and Ser-67. Phosphothreonine is present on Thr-74. Low complexity predominate over residues 78–93 (GSGAAAAGRSRAAVGR). Residue Ser-79 is modified to Phosphoserine. 2 positions are modified to omega-N-methylarginine: Arg-86 and Arg-88. Over residues 97–106 (KKTDKPRQED) the composition is skewed to basic and acidic residues. Positions 107 to 117 (KDDLDVTELTN) are enriched in acidic residues. Residues 109–153 (DLDVTELTNEDLLDQLVKYGVNPGPIVGTTRKLYEKKLLKLREQG) enclose the LEM domain. Thr-154 carries the post-translational modification Phosphothreonine. Polar residues predominate over residues 155–178 (ESRSSTPLPTISSSAENTRQNGSN). A phosphoserine mark is found at Ser-156 and Ser-159. Residues Thr-160 and Thr-164 each carry the phosphothreonine modification. A phosphoserine mark is found at Ser-166 and Ser-168. Positions 179–191 (DSDRYSDNEEGKK) are enriched in basic and acidic residues. The short motif at 190-196 (KKKEHKK) is the Nuclear localization signal element. 6 positions are modified to phosphoserine: Ser-272, Ser-312, Ser-351, Ser-354, Ser-370, and Ser-424. The tract at residues 338-368 (QPLCPERSHISDQSPLSSKRKALEESESSQL) is disordered. Positions 558–657 (TESCNQQLDL…VGRRYLWLKD (100 aa)) form a coiled coil. Lys-656 is modified (N6-acetyllysine).

It belongs to the LEM family. As to quaternary structure, interacts with LMNA, BANF1 and RB1 and with chromosomes. Associates directly or indirectly with lamins at specific cell-cycle stages. Interacts with CMTM6. In terms of processing, phosphorylated in a mitose-specific manner. As to expression, expressed in many tissues. Most abundant in adult thymus and fetal liver.

Its subcellular location is the nucleus. It is found in the chromosome. Its function is as follows. May be involved in the structural organization of the nucleus and in the post-mitotic nuclear assembly. Plays an important role, together with LMNA, in the nuclear anchorage of RB1. Functionally, TP and TP5 may play a role in T-cell development and function. TP5 is an immunomodulating pentapeptide. The chain is Lamina-associated polypeptide 2, isoform alpha (TMPO) from Homo sapiens (Human).